We begin with the raw amino-acid sequence, 398 residues long: NADH dehydrogenase [ubiquinone] iron-sulfur protein 2 (398 aa).

[4Fe-4S] cluster-binding residues include Cys-261, Cys-267, and Cys-282.

The protein belongs to the complex I 49 kDa subunit family. Complex I is composed of about 45 different subunits. This is a component of the iron-sulfur (IP) fragment of the enzyme. The cofactor is [4Fe-4S] cluster.

The protein localises to the mitochondrion. The catalysed reaction is a ubiquinone + NADH + 5 H(+)(in) = a ubiquinol + NAD(+) + 4 H(+)(out). Functionally, core subunit of the mitochondrial membrane respiratory chain NADH dehydrogenase (Complex I) that is believed to belong to the minimal assembly required for catalysis. Complex I functions in the transfer of electrons from NADH to the respiratory chain. The immediate electron acceptor for the enzyme is believed to be ubiquinone. Component of the iron-sulfur (IP) fragment of the enzyme. In Nephroselmis olivacea (Green alga), this protein is NADH dehydrogenase [ubiquinone] iron-sulfur protein 2 (NAD7).